A 463-amino-acid polypeptide reads, in one-letter code: MVRGKCMVCDSPNATNYHFGAQSCKACAAFFRRSIAMDQCYECLGDGVHSCKIDHTLRLNCRHCRLKKCQKAGMMRDLVQAKREIKSDKGKNSRNSSQSEDFFSPPPEQPGPSNYFDQFPWQASENEMDPYPSSPKIRKMSENLMGIDELQQFIQIPAGVDDFPDIFTDSDEIRSRMTSISEASAYVTGMEEEERLFGLAGLYTEQVINLNMRRRITYTDRLLGSVFDAPCVCPYDKADLKLFDHRTYRQKNRNDYTMILDYINRFPEFESLSKSEKTVLFRTAAAVDVLLDQSYYSQVIFPTEDVLVTANGEYLPMNPMPKVENQRDSGNFHSDEDYDRFKMLTSMKVRQWLHVCEPMKKLDMSLAEFSLFKALTIWHYNYYKLQCTGKQICSRQRDDIFRTLLLICDDEGHDSALIRASEIVLAVGIAMAEVHEMVTSYIEITVYDVLDDPILKDMLKFQY.

The nuclear receptor DNA-binding region spans 3 to 81; the sequence is RGKCMVCDSP…AGMMRDLVQA (79 aa). NR C4-type zinc fingers lie at residues 6–27 and 43–64; these read CMVC…CKAC and CLGD…CRHC. The interval 83–119 is disordered; that stretch reads REIKSDKGKNSRNSSQSEDFFSPPPEQPGPSNYFDQF. The NR LBD domain occupies 203–463; the sequence is YTEQVINLNM…ILKDMLKFQY (261 aa).

It belongs to the nuclear hormone receptor family.

Its subcellular location is the nucleus. Orphan nuclear receptor. The polypeptide is Nuclear hormone receptor family member nhr-79 (nhr-79) (Caenorhabditis elegans).